Here is a 285-residue protein sequence, read N- to C-terminus: Transcription initiation factor IIE subunit beta (285 aa).

Composition is skewed to polar residues over residues 1–10 and 33–44; these read MSSLSDQLSS and TPTAYLNSNDGH. The disordered stretch occupies residues 1 to 56; it reads MSSLSDQLSSFKKKVANQPIYAKPQPRQPASPTPTAYLNSNDGHSSAASSPGSYSL. Over residues 45–55 the composition is skewed to low complexity; the sequence is SSAASSPGSYS. Residues 67 to 142 constitute a DNA-binding region (TFIIE beta); the sequence is YSQPADSGVG…FTFKPLHNIR (76 aa). A disordered region spans residues 240-272; it reads PTSVDPSTVKRAGHNQTPKQKKPKTRRGKITNT. Basic residues predominate over residues 258-268; the sequence is KQKKPKTRRGK.

This sequence belongs to the TFIIE beta subunit family. As to quaternary structure, TFIIE is a tetramer of two alpha (tfa1) and two beta (tfa2) subunits. TFIIE associates with RNA polymerase II via the beta subunit.

Its subcellular location is the nucleus. Recruits TFIIH to the initiation complex and stimulates the RNA polymerase II C-terminal domain kinase and DNA-dependent ATPase activities of TFIIH. Both TFIIH and TFIIE are required for promoter clearance by RNA polymerase. This chain is Transcription initiation factor IIE subunit beta (tfa2), found in Schizosaccharomyces pombe (strain 972 / ATCC 24843) (Fission yeast).